A 140-amino-acid polypeptide reads, in one-letter code: ATP synthase epsilon chain (140 aa).

Belongs to the ATPase epsilon chain family. As to quaternary structure, F-type ATPases have 2 components, CF(1) - the catalytic core - and CF(0) - the membrane proton channel. CF(1) has five subunits: alpha(3), beta(3), gamma(1), delta(1), epsilon(1). CF(0) has three main subunits: a, b and c.

It is found in the cell inner membrane. Produces ATP from ADP in the presence of a proton gradient across the membrane. The sequence is that of ATP synthase epsilon chain from Marinobacter nauticus (strain ATCC 700491 / DSM 11845 / VT8) (Marinobacter aquaeolei).